Reading from the N-terminus, the 271-residue chain is Protein FAM110D (271 aa).

Disordered regions lie at residues 1–83 (MLLA…RPDS), 116–145 (PRDA…APEA), and 186–245 (PQSW…PVSV). Basic residues predominate over residues 68–78 (RPVRRGSGRRL). Positions 116-126 (PRDAAPSSPAS) are enriched in low complexity. Over residues 220–231 (SPGGAGGGGGSE) the composition is skewed to gly residues.

It belongs to the FAM110 family.

This Homo sapiens (Human) protein is Protein FAM110D (FAM110D).